Consider the following 335-residue polypeptide: Aspartate carbamoyltransferase catalytic subunit (335 aa).

Residues R81 and T82 each coordinate carbamoyl phosphate. L-aspartate is bound at residue K109. Residues R131, H159, and Q162 each contribute to the carbamoyl phosphate site. 2 residues coordinate L-aspartate: R192 and R246. Carbamoyl phosphate-binding residues include G287 and P288.

The protein belongs to the aspartate/ornithine carbamoyltransferase superfamily. ATCase family. In terms of assembly, heterododecamer (2C3:3R2) of six catalytic PyrB chains organized as two trimers (C3), and six regulatory PyrI chains organized as three dimers (R2).

The enzyme catalyses carbamoyl phosphate + L-aspartate = N-carbamoyl-L-aspartate + phosphate + H(+). It functions in the pathway pyrimidine metabolism; UMP biosynthesis via de novo pathway; (S)-dihydroorotate from bicarbonate: step 2/3. Catalyzes the condensation of carbamoyl phosphate and aspartate to form carbamoyl aspartate and inorganic phosphate, the committed step in the de novo pyrimidine nucleotide biosynthesis pathway. This chain is Aspartate carbamoyltransferase catalytic subunit, found in Caulobacter sp. (strain K31).